Here is a 289-residue protein sequence, read N- to C-terminus: tRNA pseudouridine synthase A (289 aa).

The Nucleophile role is filled by Asp-67. Position 125 (Tyr-125) interacts with substrate.

This sequence belongs to the tRNA pseudouridine synthase TruA family. Homodimer.

It carries out the reaction uridine(38/39/40) in tRNA = pseudouridine(38/39/40) in tRNA. Formation of pseudouridine at positions 38, 39 and 40 in the anticodon stem and loop of transfer RNAs. The protein is tRNA pseudouridine synthase A of Prochlorococcus marinus (strain MIT 9211).